The sequence spans 222 residues: Large ribosomal subunit protein mL64 (222 aa).

Disordered regions lie at residues 14–40 (LTAT…PWWP) and 188–222 (KRLK…APSS). A coiled-coil region spans residues 144–213 (EKAQADKERR…AALAAAAAQD (70 aa)). A Nuclear localization signal motif is present at residues 184–200 (KKERKRLKEEKQRQKQE). Positions 188-201 (KRLKEEKQRQKQEA) are enriched in basic and acidic residues. Over residues 202-216 (RAAALAAAAAQDPAA) the composition is skewed to low complexity.

The protein belongs to the mitochondrion-specific ribosomal protein mL64 family. As to quaternary structure, component of the mitochondrial ribosome large subunit (39S) which comprises a 16S rRNA and about 50 distinct proteins. Interacts with GADD45A, GADD45B and GADD45G. Interacts with NR4A1 via the NR4A1 AB domain. Interacts with ATAD3A and ATAD3B.

It localises to the mitochondrion. Its subcellular location is the nucleus. Acts as a negative regulator of G1 to S cell cycle phase progression by inhibiting cyclin-dependent kinases. Inhibitory effects are additive with GADD45 proteins but also occur in the absence of GADD45 proteins. Acts as a repressor of the orphan nuclear receptor NR4A1 by inhibiting AB domain-mediated transcriptional activity. May be involved in the hormone-mediated regulation of NR4A1 transcriptional activity. May play a role in mitochondrial protein synthesis. This Chlorocebus aethiops (Green monkey) protein is Large ribosomal subunit protein mL64 (GADD45GIP1).